The sequence spans 349 residues: Phosphate acyltransferase (349 aa).

It belongs to the PlsX family. As to quaternary structure, homodimer. Probably interacts with PlsY.

It is found in the cytoplasm. It carries out the reaction a fatty acyl-[ACP] + phosphate = an acyl phosphate + holo-[ACP]. It functions in the pathway lipid metabolism; phospholipid metabolism. Its function is as follows. Catalyzes the reversible formation of acyl-phosphate (acyl-PO(4)) from acyl-[acyl-carrier-protein] (acyl-ACP). This enzyme utilizes acyl-ACP as fatty acyl donor, but not acyl-CoA. This chain is Phosphate acyltransferase, found in Albidiferax ferrireducens (strain ATCC BAA-621 / DSM 15236 / T118) (Rhodoferax ferrireducens).